Consider the following 239-residue polypeptide: Ribosomal RNA small subunit methyltransferase G (239 aa).

Residues Gly-78, Phe-83, 129–130, and Arg-148 contribute to the S-adenosyl-L-methionine site; that span reads AE.

It belongs to the methyltransferase superfamily. RNA methyltransferase RsmG family.

The protein localises to the cytoplasm. Its function is as follows. Specifically methylates the N7 position of a guanine in 16S rRNA. The polypeptide is Ribosomal RNA small subunit methyltransferase G (Clostridium botulinum (strain Eklund 17B / Type B)).